We begin with the raw amino-acid sequence, 292 residues long: MAVSLNDIKTKIASTKNTSQITNAMQMVSAAKLGRSEEAARNFQVYAQKVRKLLTDILHGNGAGASTNPMLISRSVKKTGYIVITSDRGLVGGYNSSILKAVMELKEEYHPDGKGFEMICIGGMGADFFKARGIQPLYELRGLSDQPSFDQVRKIISKTVEMYQNELFDELYVCYNHHVNTLTSQMRVEQMLPIVDLDPNEADEEYSLTFELETSREEILEQLLPQFAESMIYGAIIDAKTAENAAGMTAMQTATDNAKKVINDLTIQYNRARQAAITQEITEIVAGASALE.

The protein belongs to the ATPase gamma chain family. As to quaternary structure, F-type ATPases have 2 components, CF(1) - the catalytic core - and CF(0) - the membrane proton channel. CF(1) has five subunits: alpha(3), beta(3), gamma(1), delta(1), epsilon(1). CF(0) has three main subunits: a, b and c.

It is found in the cell membrane. In terms of biological role, produces ATP from ADP in the presence of a proton gradient across the membrane. The gamma chain is believed to be important in regulating ATPase activity and the flow of protons through the CF(0) complex. The polypeptide is ATP synthase gamma chain (Streptococcus pneumoniae serotype 2 (strain D39 / NCTC 7466)).